The sequence spans 427 residues: Carboxyl-terminal-processing protease (427 aa).

Residues 1 to 31 (MGKRTRRFWALAFSLLMGALIYLGNTPSALA) form the signal peptide. One can recognise a PDZ domain in the interval 104 to 186 (NLQVTTTGEL…TKVSLEILSA (83 aa)). Residues Ser-313, Asp-324, and Lys-338 each act as charge relay system in the active site.

The protein belongs to the peptidase S41A family.

It is found in the cellular thylakoid lumen. It carries out the reaction The enzyme shows specific recognition of a C-terminal tripeptide, Xaa-Yaa-Zaa, in which Xaa is preferably Ala or Leu, Yaa is preferably Ala or Tyr, and Zaa is preferably Ala, but then cleaves at a variable distance from the C-terminus. A typical cleavage is -Ala-Ala-|-Arg-Ala-Ala-Lys-Glu-Asn-Tyr-Ala-Leu-Ala-Ala.. Functionally, cleavage of the 16 C-terminal residues from the D1 precursor of photosystem II (PSII). This proteolytic processing is necessary to allow the light-driven assembly of the oxygen-evolving cluster (a tetranuclear manganese), which is responsible for photosynthetic water oxidation. The chain is Carboxyl-terminal-processing protease (ctpA) from Synechocystis sp. (strain ATCC 27184 / PCC 6803 / Kazusa).